Consider the following 234-residue polypeptide: Thiamine-phosphate synthase (234 aa).

Residues 65-69 and Asn97 contribute to the 4-amino-2-methyl-5-(diphosphooxymethyl)pyrimidine site; that span reads QYRNK. Residues Asp98 and Asp117 each coordinate Mg(2+). Ser136 is a binding site for 4-amino-2-methyl-5-(diphosphooxymethyl)pyrimidine. 163–165 contacts 2-[(2R,5Z)-2-carboxy-4-methylthiazol-5(2H)-ylidene]ethyl phosphate; the sequence is SHT. Lys166 is a binding site for 4-amino-2-methyl-5-(diphosphooxymethyl)pyrimidine. 2-[(2R,5Z)-2-carboxy-4-methylthiazol-5(2H)-ylidene]ethyl phosphate contacts are provided by residues Gly192 and 212–213; that span reads IS.

This sequence belongs to the thiamine-phosphate synthase family. Mg(2+) serves as cofactor.

It catalyses the reaction 2-[(2R,5Z)-2-carboxy-4-methylthiazol-5(2H)-ylidene]ethyl phosphate + 4-amino-2-methyl-5-(diphosphooxymethyl)pyrimidine + 2 H(+) = thiamine phosphate + CO2 + diphosphate. It carries out the reaction 2-(2-carboxy-4-methylthiazol-5-yl)ethyl phosphate + 4-amino-2-methyl-5-(diphosphooxymethyl)pyrimidine + 2 H(+) = thiamine phosphate + CO2 + diphosphate. The enzyme catalyses 4-methyl-5-(2-phosphooxyethyl)-thiazole + 4-amino-2-methyl-5-(diphosphooxymethyl)pyrimidine + H(+) = thiamine phosphate + diphosphate. It functions in the pathway cofactor biosynthesis; thiamine diphosphate biosynthesis; thiamine phosphate from 4-amino-2-methyl-5-diphosphomethylpyrimidine and 4-methyl-5-(2-phosphoethyl)-thiazole: step 1/1. Its function is as follows. Condenses 4-methyl-5-(beta-hydroxyethyl)thiazole monophosphate (THZ-P) and 2-methyl-4-amino-5-hydroxymethyl pyrimidine pyrophosphate (HMP-PP) to form thiamine monophosphate (TMP). This chain is Thiamine-phosphate synthase, found in Xylella fastidiosa (strain 9a5c).